A 1021-amino-acid chain; its full sequence is Ubiquitin-activating enzyme E1 1 (1021 aa).

ATP contacts are provided by Arg22, Ala442, and Asp468. Asp470 lines the Mg(2+) pocket. ATP is bound by residues Arg479, Lys492, Val518, and 542–543 (DN). Position 542 (Asp542) interacts with Mg(2+). Cys598 serves as the catalytic Glycyl thioester intermediate.

Belongs to the ubiquitin-activating E1 family. In terms of assembly, monomer.

The protein resides in the cytoplasm. Its subcellular location is the nucleus. The enzyme catalyses ATP + ubiquitin + [E1 ubiquitin-activating enzyme]-L-cysteine = AMP + diphosphate + S-ubiquitinyl-[E1 ubiquitin-activating enzyme]-L-cysteine.. Its pathway is protein modification; protein ubiquitination. In terms of biological role, E1 ubiquitin-activating enzyme that catalyzes the first step in ubiquitin conjugation to mark cellular proteins for degradation through the ubiquitin-proteasome system. Activates ubiquitin by first adenylating its C-terminal glycine residue with ATP, and thereafter linking this residue to the side chain of a cysteine residue in E1, yielding a ubiquitin-E1 thioester and free AMP. The protein is Ubiquitin-activating enzyme E1 1 (UBA1) of Candida albicans (strain WO-1) (Yeast).